The following is a 312-amino-acid chain: Aspartate carbamoyltransferase catalytic subunit (312 aa).

Positions 62 and 63 each coordinate carbamoyl phosphate. K90 contributes to the L-aspartate binding site. Carbamoyl phosphate contacts are provided by R112, H140, and Q143. 2 residues coordinate L-aspartate: R173 and R228. 2 residues coordinate carbamoyl phosphate: G269 and P270.

This sequence belongs to the aspartate/ornithine carbamoyltransferase superfamily. ATCase family. As to quaternary structure, heterododecamer (2C3:3R2) of six catalytic PyrB chains organized as two trimers (C3), and six regulatory PyrI chains organized as three dimers (R2).

The enzyme catalyses carbamoyl phosphate + L-aspartate = N-carbamoyl-L-aspartate + phosphate + H(+). Its pathway is pyrimidine metabolism; UMP biosynthesis via de novo pathway; (S)-dihydroorotate from bicarbonate: step 2/3. Catalyzes the condensation of carbamoyl phosphate and aspartate to form carbamoyl aspartate and inorganic phosphate, the committed step in the de novo pyrimidine nucleotide biosynthesis pathway. The polypeptide is Aspartate carbamoyltransferase catalytic subunit (Deinococcus geothermalis (strain DSM 11300 / CIP 105573 / AG-3a)).